Consider the following 98-residue polypeptide: Cuticle protein 67, isoform A (98 aa).

6 repeat units span residues 7-10 (AAPA), 15-18 (AAPA), 22-25 (AAPA), 79-82 (AAPA), 86-89 (AAPA), and 92-95 (AAPA).

Its function is as follows. Component of the cuticle of migratory locust which contains more than 100 different structural proteins. In Locusta migratoria (Migratory locust), this protein is Cuticle protein 67, isoform A.